A 374-amino-acid chain; its full sequence is 5-hydroxytryptamine receptor 1D (374 aa).

N-linked (GlcNAc...) asparagine glycans are attached at residues N5, N17, and N21. The next 3 membrane-spanning stretches (helical) occupy residues 36-61, 73-94, and 107-131; these read ISLV…TTIL, LIGS…ISIA, and LCDI…VIAL. C108 and C185 are joined by a disulfide. 2 residues coordinate serotonin: D115 and C119. Residues 132–134 carry the DRY motif; important for ligand-induced conformation changes motif; it reads DRY. Helical transmembrane passes span 152–173, 192–215, 298–323, and 333–356; these read AAAM…PLFW, ISYT…ILYG, KTLG…VLPI, and ALFD…YTVF. Position 318 (S318) interacts with serotonin. The NPxxY motif; important for ligand-induced conformation changes and signaling motif lies at 349-353; it reads NPVIY.

The protein belongs to the G-protein coupled receptor 1 family. Homodimer. Heterodimer with HTR1B. As to expression, detected in dorsal raphe.

It localises to the cell membrane. In terms of biological role, G-protein coupled receptor for 5-hydroxytryptamine (serotonin). Also functions as a receptor for ergot alkaloid derivatives, various anxiolytic and antidepressant drugs and other psychoactive substances. Ligand binding causes a conformation change that triggers signaling via guanine nucleotide-binding proteins (G proteins) and modulates the activity of downstream effectors, such as adenylate cyclase. HTR1D is coupled to G(i)/G(o) G alpha proteins and mediates inhibitory neurotransmission by inhibiting adenylate cyclase activity. Regulates the release of 5-hydroxytryptamine in the brain, and thereby affects neural activity. May also play a role in regulating the release of other neurotransmitters. May play a role in vasoconstriction. In Rattus norvegicus (Rat), this protein is 5-hydroxytryptamine receptor 1D (Htr1d).